A 250-amino-acid polypeptide reads, in one-letter code: Probable transcriptional regulatory protein PERMA_0079 (250 aa).

This sequence belongs to the TACO1 family.

It localises to the cytoplasm. The chain is Probable transcriptional regulatory protein PERMA_0079 from Persephonella marina (strain DSM 14350 / EX-H1).